A 20-amino-acid polypeptide reads, in one-letter code: Sperm acrosome membrane-associated protein 3, processed form (20 aa).

It belongs to the glycosyl hydrolase 22 family.

Functionally, sperm surface membrane protein that may be involved in sperm-egg plasma membrane adhesion and fusion during fertilization. It could be a potential receptor for the egg oligosaccharide residue N-acetylglucosamine, which is present in the extracellular matrix over the egg plasma membrane. The polypeptide is Sperm acrosome membrane-associated protein 3, processed form (SPACA3) (Vulpes vulpes (Red fox)).